Reading from the N-terminus, the 286-residue chain is MKLAVYGKGGIGKSTTSCNISVALARRGKKVLQIGCDPKHDSTFTLTGFLIPTIIDTLQSKDYHYENVWPEDVIYKGYGGVDCVEAGGPPAGAGCGGYVVGETVKLLKELNAFDEYDVILFDVLGDVVCGGFAAPLNYADYCLIVTDNGFDALFAANRIAASVREKARTHVLRLAGLIGNRTAKRDLIDKYVEAVPMPVLEILPLIEDIRVSRVKGKTLFEMAESDPSLNYVCDYYLNIADQILARPEGVVPQGAPDRDLFALLSDFYLNPAPNKVEQEDLELMMV.

Residues 10–15 (GIGKST) and K39 contribute to the ATP site. S14 contributes to the Mg(2+) binding site. Residues C95 and C129 each coordinate [4Fe-4S] cluster. 180–181 (NR) is a binding site for ATP.

This sequence belongs to the NifH/BchL/ChlL family. As to quaternary structure, homodimer. Protochlorophyllide reductase is composed of three subunits; ChlL, ChlN and ChlB. [4Fe-4S] cluster serves as cofactor.

It carries out the reaction chlorophyllide a + oxidized 2[4Fe-4S]-[ferredoxin] + 2 ADP + 2 phosphate = protochlorophyllide a + reduced 2[4Fe-4S]-[ferredoxin] + 2 ATP + 2 H2O. Its pathway is porphyrin-containing compound metabolism; chlorophyll biosynthesis (light-independent). In terms of biological role, component of the dark-operative protochlorophyllide reductase (DPOR) that uses Mg-ATP and reduced ferredoxin to reduce ring D of protochlorophyllide (Pchlide) to form chlorophyllide a (Chlide). This reaction is light-independent. The L component serves as a unique electron donor to the NB-component of the complex, and binds Mg-ATP. In Cyanothece sp. (strain PCC 7425 / ATCC 29141), this protein is Light-independent protochlorophyllide reductase iron-sulfur ATP-binding protein.